Consider the following 963-residue polypeptide: Kinesin-1 heavy chain (963 aa).

Ala-2 is modified (N-acetylalanine). A Kinesin motor domain is found at 8–325 (NIKVMCRFRP…LLFGQRAKTI (318 aa)). 85 to 92 (GQTSSGKT) provides a ligand contact to ATP. Lys-213 participates in a covalent cross-link: Glycyl lysine isopeptide (Lys-Gly) (interchain with G-Cter in SUMO2). The stretch at 329 to 914 (VCVNVELTAE…AVRSKNMARR (586 aa)) forms a coiled coil. Residues 908–963 (SKNMARRGHSAQIAKPIRPGQHPAASPTHPGTVRGGGSFVQNNQPVGLRGGGGKQS) are disordered. A globular region spans residues 915 to 963 (GHSAQIAKPIRPGQHPAASPTHPGTVRGGGSFVQNNQPVGLRGGGGKQS). Phosphoserine is present on residues Ser-933 and Ser-945. Arg-956 is subject to Omega-N-methylarginine.

The protein belongs to the TRAFAC class myosin-kinesin ATPase superfamily. Kinesin family. Kinesin subfamily. In terms of assembly, oligomer composed of two heavy chains and two light chains. Interacts with GRIP1 and PPP1R42. Interacts with SYBU. Interacts with JAKMIP1. Interacts with PLEKHM2. Interacts with ECPAS. Interacts with ZFYVE27. Found in a complex with OGT, RHOT1, RHOT2 and TRAK1. Interacts with APP (via cytoplasmic domain).

The protein resides in the cytoplasm. It localises to the cytoskeleton. It is found in the cytolytic granule membrane. The protein localises to the lysosome membrane. Microtubule-dependent motor required for normal distribution of mitochondria and lysosomes. May be involved in the mechanisms of growth arrest induced by exposure to DNA-damaging drugs or by cellular senescence. Can induce formation of neurite-like membrane protrusions in non-neuronal cells in a ZFYVE27-dependent manner. Regulates centrosome and nuclear positioning during mitotic entry. During the G2 phase of the cell cycle in a BICD2-dependent manner, antagonizes dynein function and drives the separation of nuclei and centrosomes. Required for anterograde axonal transportation of MAPK8IP3/JIP3 which is essential for MAPK8IP3/JIP3 function in axon elongation. Through binding with PLEKHM2 and ARL8B, directs lysosome movement toward microtubule plus ends. Involved in NK cell-mediated cytotoxicity. Drives the polarization of cytolytic granules and microtubule-organizing centers (MTOCs) toward the immune synapse between effector NK lymphocytes and target cells. The protein is Kinesin-1 heavy chain (Kif5b) of Mus musculus (Mouse).